The primary structure comprises 142 residues: Small ribosomal subunit protein bS16 (142 aa).

A disordered region spans residues 88-142 (GAEGTLRQPEGKTPFVAPDNGSVIIPEAITPKAEKAEEAPAEDAAPAEDDAEKAE). Positions 126–142 (APAEDAAPAEDDAEKAE) are enriched in acidic residues.

The protein belongs to the bacterial ribosomal protein bS16 family.

This chain is Small ribosomal subunit protein bS16, found in Kocuria rhizophila (strain ATCC 9341 / DSM 348 / NBRC 103217 / DC2201).